Here is a 472-residue protein sequence, read N- to C-terminus: Homeobox protein PKNOX2 (472 aa).

Residues 1 to 62 (MMQHASPAPA…STPVPSAPID (62 aa)) are disordered. Over residues 26–38 (DSPQMTATTQPPS) the composition is skewed to polar residues. Over residues 46-56 (SAPSAAASTPV) the composition is skewed to low complexity. The 84-residue stretch at 96–179 (GSECITSASF…MHSDNLLRND (84 aa)) folds into the MEIS N-terminal domain. A DNA-binding region (homeobox) is located at residues 291 to 350 (KRGVLPKHATNIMRSWLFQHLMHPYPTEDEKRQIAAQTNLTLLQVNNWFVNARRRILQPM). 3 disordered regions span residues 351-371 (LDASNPDPAPKAKKIKSQHRP), 386-405 (QQQGGAPGTNPDGSINLDNL), and 423-472 (AAHD…DSLV). The span at 361–371 (KAKKIKSQHRP) shows a compositional bias: basic residues. Positions 396-405 (PDGSINLDNL) are enriched in polar residues. The segment covering 429–454 (LDGTEEEDEDEMEEEEEEELEEEVDE) has biased composition (acidic residues).

It belongs to the TALE/MEIS homeobox family.

Its subcellular location is the nucleus. The polypeptide is Homeobox protein PKNOX2 (PKNOX2) (Pongo abelii (Sumatran orangutan)).